The chain runs to 214 residues: NADH-quinone oxidoreductase subunit C (214 aa).

It belongs to the complex I 30 kDa subunit family. NDH-1 is composed of 14 different subunits. Subunits NuoB, C, D, E, F, and G constitute the peripheral sector of the complex.

It is found in the cell inner membrane. The catalysed reaction is a quinone + NADH + 5 H(+)(in) = a quinol + NAD(+) + 4 H(+)(out). Its function is as follows. NDH-1 shuttles electrons from NADH, via FMN and iron-sulfur (Fe-S) centers, to quinones in the respiratory chain. The immediate electron acceptor for the enzyme in this species is believed to be ubiquinone. Couples the redox reaction to proton translocation (for every two electrons transferred, four hydrogen ions are translocated across the cytoplasmic membrane), and thus conserves the redox energy in a proton gradient. This Francisella tularensis subsp. mediasiatica (strain FSC147) protein is NADH-quinone oxidoreductase subunit C.